Reading from the N-terminus, the 261-residue chain is Indole-3-glycerol phosphate synthase (261 aa).

Belongs to the TrpC family.

It catalyses the reaction 1-(2-carboxyphenylamino)-1-deoxy-D-ribulose 5-phosphate + H(+) = (1S,2R)-1-C-(indol-3-yl)glycerol 3-phosphate + CO2 + H2O. Its pathway is amino-acid biosynthesis; L-tryptophan biosynthesis; L-tryptophan from chorismate: step 4/5. The protein is Indole-3-glycerol phosphate synthase of Burkholderia ambifaria (strain ATCC BAA-244 / DSM 16087 / CCUG 44356 / LMG 19182 / AMMD) (Burkholderia cepacia (strain AMMD)).